An 877-amino-acid polypeptide reads, in one-letter code: DNA mismatch repair protein MutS (877 aa).

Residue 630 to 637 (GPNMAGKS) participates in ATP binding.

It belongs to the DNA mismatch repair MutS family.

In terms of biological role, this protein is involved in the repair of mismatches in DNA. It is possible that it carries out the mismatch recognition step. This protein has a weak ATPase activity. The protein is DNA mismatch repair protein MutS of Ruegeria pomeroyi (strain ATCC 700808 / DSM 15171 / DSS-3) (Silicibacter pomeroyi).